The primary structure comprises 214 residues: Probable nicotinate-nucleotide adenylyltransferase (214 aa).

This sequence belongs to the NadD family.

The catalysed reaction is nicotinate beta-D-ribonucleotide + ATP + H(+) = deamido-NAD(+) + diphosphate. Its pathway is cofactor biosynthesis; NAD(+) biosynthesis; deamido-NAD(+) from nicotinate D-ribonucleotide: step 1/1. In terms of biological role, catalyzes the reversible adenylation of nicotinate mononucleotide (NaMN) to nicotinic acid adenine dinucleotide (NaAD). The protein is Probable nicotinate-nucleotide adenylyltransferase of Pseudomonas fluorescens (strain ATCC BAA-477 / NRRL B-23932 / Pf-5).